The primary structure comprises 118 residues: Large ribosomal subunit protein bL20 (118 aa).

The protein belongs to the bacterial ribosomal protein bL20 family.

Its function is as follows. Binds directly to 23S ribosomal RNA and is necessary for the in vitro assembly process of the 50S ribosomal subunit. It is not involved in the protein synthesizing functions of that subunit. In Hahella chejuensis (strain KCTC 2396), this protein is Large ribosomal subunit protein bL20.